Reading from the N-terminus, the 450-residue chain is Eukaryotic translation initiation factor 3 subunit E (450 aa).

Residues 255-424 (TELFFSPAYI…GTVIMNHPPQ (170 aa)) enclose the PCI domain.

This sequence belongs to the eIF-3 subunit E family. As to quaternary structure, component of the eukaryotic translation initiation factor 3 (eIF-3) complex.

It is found in the cytoplasm. Functionally, component of the eukaryotic translation initiation factor 3 (eIF-3) complex, which is involved in protein synthesis of a specialized repertoire of mRNAs and, together with other initiation factors, stimulates binding of mRNA and methionyl-tRNAi to the 40S ribosome. The eIF-3 complex specifically targets and initiates translation of a subset of mRNAs involved in cell proliferation. This is Eukaryotic translation initiation factor 3 subunit E (int6) from Aspergillus clavatus (strain ATCC 1007 / CBS 513.65 / DSM 816 / NCTC 3887 / NRRL 1 / QM 1276 / 107).